A 224-amino-acid polypeptide reads, in one-letter code: Thylakoid lumenal 15 kDa protein 1, chloroplastic (224 aa).

The transit peptide at 1-34 directs the protein to the chloroplast; sequence MVILSNVSLFSCCNISQKPSLFSPSSRSSHCPIR. A thylakoid-targeting transit peptide spans 35 to 81; sequence CSQSQEGKEVVTSPLRSVVWSLGEEVSKRSLFALVSASLFFVDPALA. 2 consecutive Pentapeptide repeat domains span residues 116–155 and 156–196; these read SILR…DFSL and ANVT…PLRD.

It is found in the plastid. The protein resides in the chloroplast thylakoid lumen. This Arabidopsis thaliana (Mouse-ear cress) protein is Thylakoid lumenal 15 kDa protein 1, chloroplastic.